A 137-amino-acid polypeptide reads, in one-letter code: Immunoglobulin domain-containing protein oig-1 (137 aa).

The N-terminal stretch at 1–23 (MFSELRILRDILLLCFLSVGINA) is a signal peptide. Positions 41-133 (PKISRSSYFK…KGSRVKKFLT (93 aa)) constitute an Ig-like C2-type domain. The cysteines at positions 63 and 118 are disulfide-linked.

Expressed in DD and VD GABAergic motor neurons. Expressed in a subset of head neurons including M2 motor neurons in the pharynx. Expressed in coelomocytes.

The protein localises to the membrane. Its subcellular location is the secreted. It is found in the extracellular space. It localises to the cell projection. The protein resides in the dendrite. The protein localises to the axon. Functionally, plays a role in neural development, where it temporally regulates synapse formation in the D-type inhibitory GABAergic motor neurons, dorsal D (DD) and ventral D (VD) motor neurons. Controls the translocation of postsynaptic proteins, such as the acetylcholine receptor subunit acr-12, and presynaptic proteins, such as snb-1, along nerve cords to prevent premature synapse remodeling/formation. The sequence is that of Immunoglobulin domain-containing protein oig-1 from Caenorhabditis elegans.